The sequence spans 464 residues: MTEKKNTERQLTSVQEEVIKGFTTGYGITPESQTDAAALRREFLDDQITMLTWADGDLSFYRDITKRPATSTVAKYDVYLAHGRVGHTRFTREIGVAPISDPNLRQKTVNMKYVSDTKNMSIATGLVNNIEDPMRILTDDAISVVAKTIEWASFYGDSDLSENPDAGSGLEFDGLAKLIDKHNVLDAKGASLTEALLNQASVLVGKGYGTPTDAYMPIGVQADFVNQQLDRQVQVISDNGQNATMGFNVKGFNSARGFIRLHGSTVMELEQILDENRMQLPNAPQKATVKATLEAGTKGKFRDEDLTIDTEYKVVVVSDDAESAPSDVASVVIDDKKKQVKLEITINNMYQARPQYVAIYRKGLETGLFYQIARVPASKAVEGVITFIDVNDEIPETADVFVGELTPSVVHLFELLPMMRLPLAQVNASVTFAVLWYGALALRAPKKWARIKNVKYIATGNVFN.

Residues 1-20 (MTEKKNTERQLTSVQEEVIK) constitute a propeptide that is removed on maturation. Residues 423–445 (LAQVNASVTFAVLWYGALALRAP) traverse the membrane as a helical segment.

Its subcellular location is the virion. It is found in the host membrane. In Enterococcus faecalis (Streptococcus faecalis), this protein is Putative major capsid protein.